The following is a 251-amino-acid chain: Prolactin-7C1 (251 aa).

An N-terminal signal peptide occupies residues 1–30 (MLLSLTHPSFLAMLPMLLMSNLLQWEGVTS). The N-linked (GlcNAc...) asparagine glycan is linked to Asn57. 2 disulfides stabilise this stretch: Cys101–Cys217 and Cys234–Cys242.

It belongs to the somatotropin/prolactin family. In terms of tissue distribution, expressed exclusively in the placenta. Expressed in spongiotrophoblast cells and trophoblast giant cells of the junctional zone and in labyrinthine trophoblast.

It localises to the secreted. This is Prolactin-7C1 (Prl7c1) from Mus musculus (Mouse).